Here is a 344-residue protein sequence, read N- to C-terminus: Phenylalanine--tRNA ligase alpha subunit (344 aa).

Glu-258 is a Mg(2+) binding site.

This sequence belongs to the class-II aminoacyl-tRNA synthetase family. Phe-tRNA synthetase alpha subunit type 1 subfamily. As to quaternary structure, tetramer of two alpha and two beta subunits. Requires Mg(2+) as cofactor.

The protein localises to the cytoplasm. It carries out the reaction tRNA(Phe) + L-phenylalanine + ATP = L-phenylalanyl-tRNA(Phe) + AMP + diphosphate + H(+). This Thiobacillus denitrificans (strain ATCC 25259 / T1) protein is Phenylalanine--tRNA ligase alpha subunit.